The chain runs to 1270 residues: DNA-directed RNA polymerase subunit beta (1270 aa).

This sequence belongs to the RNA polymerase beta chain family. In terms of assembly, the RNAP catalytic core consists of 2 alpha, 1 beta, 1 beta' and 1 omega subunit. When a sigma factor is associated with the core the holoenzyme is formed, which can initiate transcription.

The enzyme catalyses RNA(n) + a ribonucleoside 5'-triphosphate = RNA(n+1) + diphosphate. Functionally, DNA-dependent RNA polymerase catalyzes the transcription of DNA into RNA using the four ribonucleoside triphosphates as substrates. The sequence is that of DNA-directed RNA polymerase subunit beta from Porphyromonas cangingivalis.